The primary structure comprises 263 residues: Endonuclease 8 (263 aa).

P2 (schiff-base intermediate with DNA) is an active-site residue. The active-site Proton donor is the E3. K53 acts as the Proton donor; for beta-elimination activity in catalysis. Positions 70, 125, and 169 each coordinate DNA. Residues 229–263 (KVFHRDGEPCERCGSIIEKTTLSSRPFYWCPGCQH) form an FPG-type zinc finger. R253 acts as the Proton donor; for delta-elimination activity in catalysis.

The protein belongs to the FPG family. Requires Zn(2+) as cofactor.

The enzyme catalyses 2'-deoxyribonucleotide-(2'-deoxyribose 5'-phosphate)-2'-deoxyribonucleotide-DNA = a 3'-end 2'-deoxyribonucleotide-(2,3-dehydro-2,3-deoxyribose 5'-phosphate)-DNA + a 5'-end 5'-phospho-2'-deoxyribonucleoside-DNA + H(+). Functionally, involved in base excision repair of DNA damaged by oxidation or by mutagenic agents. Acts as a DNA glycosylase that recognizes and removes damaged bases. Has a preference for oxidized pyrimidines, such as thymine glycol, 5,6-dihydrouracil and 5,6-dihydrothymine. Has AP (apurinic/apyrimidinic) lyase activity and introduces nicks in the DNA strand. Cleaves the DNA backbone by beta-delta elimination to generate a single-strand break at the site of the removed base with both 3'- and 5'-phosphates. The chain is Endonuclease 8 from Shigella sonnei (strain Ss046).